Reading from the N-terminus, the 684-residue chain is Translation factor GUF1 homolog, mitochondrial (684 aa).

The region spanning His82–Lys270 is the tr-type G domain. GTP-binding positions include Ala91–Ser98, Asp163–His167, and Asn217–Asp220.

This sequence belongs to the TRAFAC class translation factor GTPase superfamily. Classic translation factor GTPase family. LepA subfamily.

It is found in the mitochondrion inner membrane. The catalysed reaction is GTP + H2O = GDP + phosphate + H(+). In terms of biological role, promotes mitochondrial protein synthesis. May act as a fidelity factor of the translation reaction, by catalyzing a one-codon backward translocation of tRNAs on improperly translocated ribosomes. Binds to mitochondrial ribosomes in a GTP-dependent manner. In Physcomitrium patens (Spreading-leaved earth moss), this protein is Translation factor GUF1 homolog, mitochondrial.